Reading from the N-terminus, the 341-residue chain is Flagellar P-ring protein (341 aa).

The N-terminal stretch at 1–19 (MKQVFLWLIFVLAFHKLLA) is a signal peptide.

Belongs to the FlgI family. The basal body constitutes a major portion of the flagellar organelle and consists of four rings (L,P,S, and M) mounted on a central rod.

The protein localises to the periplasm. The protein resides in the bacterial flagellum basal body. Its function is as follows. Assembles around the rod to form the L-ring and probably protects the motor/basal body from shearing forces during rotation. The sequence is that of Flagellar P-ring protein from Helicobacter acinonychis (strain Sheeba).